Here is a 209-residue protein sequence, read N- to C-terminus: Uracil phosphoribosyltransferase (209 aa).

Residues Arg-79, Arg-104, and 131–139 (DPMLATGGS) each bind 5-phospho-alpha-D-ribose 1-diphosphate. Uracil is bound by residues Ile-194 and 199–201 (GDA). Residue Asp-200 participates in 5-phospho-alpha-D-ribose 1-diphosphate binding.

The protein belongs to the UPRTase family. Mg(2+) serves as cofactor.

The catalysed reaction is UMP + diphosphate = 5-phospho-alpha-D-ribose 1-diphosphate + uracil. It participates in pyrimidine metabolism; UMP biosynthesis via salvage pathway; UMP from uracil: step 1/1. Its activity is regulated as follows. Allosterically activated by GTP. Its function is as follows. Catalyzes the conversion of uracil and 5-phospho-alpha-D-ribose 1-diphosphate (PRPP) to UMP and diphosphate. In Lacticaseibacillus paracasei (strain ATCC 334 / BCRC 17002 / CCUG 31169 / CIP 107868 / KCTC 3260 / NRRL B-441) (Lactobacillus paracasei), this protein is Uracil phosphoribosyltransferase.